Reading from the N-terminus, the 232-residue chain is uncharacterized protein (232 aa).

Disordered regions lie at residues 123–147 (VAGGKHSSNRRPRGTIRAVPGRKYP) and 169–200 (AAADPQERVGPRGRRGLAGQQQCRGRPGPSLR).

This sequence belongs to the mycobacterial PPE family.

This is an uncharacterized protein from Mycobacterium tuberculosis (strain ATCC 25618 / H37Rv).